A 260-amino-acid chain; its full sequence is CD27 antigen (260 aa).

Positions 1-19 (MARPHPWWLCVLGTLVGLS) are cleaved as a signal peptide. The Extracellular portion of the chain corresponds to 20-191 (ATPAPKSCPE…RSLCSSDFIR (172 aa)). TNFR-Cys repeat units lie at residues 26 to 63 (SCPE…AQCD), 64 to 104 (PCIP…NAEC), and 105 to 141 (ACRN…PHPQ). 8 cysteine pairs are disulfide-bonded: Cys-27–Cys-39, Cys-40–Cys-53, Cys-43–Cys-62, Cys-65–Cys-81, Cys-84–Cys-96, Cys-87–Cys-104, Cys-106–Cys-120, and Cys-112–Cys-117. Asn-95 carries N-linked (GlcNAc...) asparagine glycosylation. Residue Ser-127 is glycosylated (O-linked (GalNAc...) serine). Residues 192-212 (ILVIFSGMFLVFTLAGALFLH) form a helical membrane-spanning segment. Topologically, residues 213–260 (QRRKYRSNKGESPVEPAEPCHYSCPREEEGSTIPIQEDYRKPEPACSP) are cytoplasmic. Ser-219 is subject to Phosphoserine. Residues 219–260 (SNKGESPVEPAEPCHYSCPREEEGSTIPIQEDYRKPEPACSP) form a disordered region. The span at 249–260 (EDYRKPEPACSP) shows a compositional bias: basic and acidic residues.

In terms of assembly, homodimer. Interacts with SIVA1; may play a role in apoptosis through association with SIVA1. Interacts with TRAF2. Interacts ith PTPN6. Phosphorylated. Post-translationally, N-glycosylated. In terms of processing, O-glycosylated with core 1 or possibly core 8 glycans. As to expression, found in most T-lymphocytes.

The protein localises to the cell membrane. Functionally, costimulatory immune-checkpoint receptor expressed at the surface of T-cells, NK-cells and B-cells which binds to and is activated by its ligand CD70/CD27L expressed by B-cells. The CD70-CD27 signaling pathway mediates antigen-specific T-cell activation and expansion which in turn provides immune surveillance of B-cells. Mechanistically, CD70 ligation activates the TRAF2-PTPN6 axis that subsequently inhibits LCK phosphorylation to promote phenotypic and transcriptional adaptations of T-cell memory. In addition, activation by CD70 on early progenitor cells provides a negative feedback signal to leukocyte differentiation during immune activation and thus modulates hematopoiesis. Negatively regulates the function of Th2 lymphocytes in the adipose tissue. The sequence is that of CD27 antigen from Homo sapiens (Human).